The following is a 398-amino-acid chain: Phosphoglycerate kinase (398 aa).

Residues 23–25 (DFN), Arg-38, 61–64 (HMGK), Arg-122, and Arg-155 each bind substrate. ATP is bound by residues Lys-206, Gly-297, Glu-328, and 354-357 (GGDS).

Belongs to the phosphoglycerate kinase family. In terms of assembly, monomer.

It localises to the cytoplasm. It catalyses the reaction (2R)-3-phosphoglycerate + ATP = (2R)-3-phospho-glyceroyl phosphate + ADP. It participates in carbohydrate degradation; glycolysis; pyruvate from D-glyceraldehyde 3-phosphate: step 2/5. This Clostridium botulinum (strain Hall / ATCC 3502 / NCTC 13319 / Type A) protein is Phosphoglycerate kinase.